Reading from the N-terminus, the 605-residue chain is Elongation factor 4 (605 aa).

The tr-type G domain occupies 9–192 (GMIRNFCIIA…AIVARVPAPA (184 aa)). Residues 21-26 (DHGKST) and 139-142 (NKID) each bind GTP.

It belongs to the TRAFAC class translation factor GTPase superfamily. Classic translation factor GTPase family. LepA subfamily.

The protein resides in the cell inner membrane. It carries out the reaction GTP + H2O = GDP + phosphate + H(+). Its function is as follows. Required for accurate and efficient protein synthesis under certain stress conditions. May act as a fidelity factor of the translation reaction, by catalyzing a one-codon backward translocation of tRNAs on improperly translocated ribosomes. Back-translocation proceeds from a post-translocation (POST) complex to a pre-translocation (PRE) complex, thus giving elongation factor G a second chance to translocate the tRNAs correctly. Binds to ribosomes in a GTP-dependent manner. The chain is Elongation factor 4 from Chlorobaculum tepidum (strain ATCC 49652 / DSM 12025 / NBRC 103806 / TLS) (Chlorobium tepidum).